Reading from the N-terminus, the 439-residue chain is tRNA-2-methylthio-N(6)-dimethylallyladenosine synthase (439 aa).

The MTTase N-terminal domain maps to 2–115 (KGLYIKTYGC…LPELIVKASR (114 aa)). [4Fe-4S] cluster is bound by residues cysteine 11, cysteine 47, cysteine 78, cysteine 155, cysteine 159, and cysteine 162. The Radical SAM core domain maps to 141–372 (NSQGSSAFLA…QKLISKQQLE (232 aa)). Residues 375–439 (QSMVGKTIPV…QSSLLGCAFH (65 aa)) enclose the TRAM domain.

The protein belongs to the methylthiotransferase family. MiaB subfamily. Monomer. It depends on [4Fe-4S] cluster as a cofactor.

The protein resides in the cytoplasm. It carries out the reaction N(6)-dimethylallyladenosine(37) in tRNA + (sulfur carrier)-SH + AH2 + 2 S-adenosyl-L-methionine = 2-methylsulfanyl-N(6)-dimethylallyladenosine(37) in tRNA + (sulfur carrier)-H + 5'-deoxyadenosine + L-methionine + A + S-adenosyl-L-homocysteine + 2 H(+). In terms of biological role, catalyzes the methylthiolation of N6-(dimethylallyl)adenosine (i(6)A), leading to the formation of 2-methylthio-N6-(dimethylallyl)adenosine (ms(2)i(6)A) at position 37 in tRNAs that read codons beginning with uridine. This is tRNA-2-methylthio-N(6)-dimethylallyladenosine synthase from Wolbachia pipientis wMel.